Here is a 734-residue protein sequence, read N- to C-terminus: Photosystem I P700 chlorophyll a apoprotein A2 (734 aa).

8 helical membrane passes run 46-69 (IFAS…FHVA), 135-158 (LYTG…LHLQ), 175-199 (LNHH…HVAI), 273-291 (MAHH…GHMY), 330-353 (LHMQ…QHMY), 369-395 (ASLY…IFFV), 417-439 (AIIS…LYVH), and 517-535 (FLVH…LILV). The [4Fe-4S] cluster site is built by Cys-559 and Cys-568. A run of 2 helical transmembrane segments spans residues 575 to 596 (AFYL…YWHW) and 643 to 665 (LSVW…MFLI). His-654, Met-662, and Tyr-670 together coordinate chlorophyll a. A phylloquinone-binding site is contributed by Trp-671. Residues 707-727 (LVGLAHFSVGYVLTYAAFVLA) form a helical membrane-spanning segment.

Belongs to the PsaA/PsaB family. As to quaternary structure, the PsaA/B heterodimer binds the P700 chlorophyll special pair and subsequent electron acceptors. PSI consists of a core antenna complex that captures photons, and an electron transfer chain that converts photonic excitation into a charge separation. The eukaryotic PSI reaction center is composed of at least 11 subunits. P700 is a chlorophyll a/chlorophyll a' dimer, A0 is one or more chlorophyll a, A1 is one or both phylloquinones and FX is a shared 4Fe-4S iron-sulfur center. serves as cofactor.

It localises to the plastid. The protein resides in the chloroplast thylakoid membrane. It catalyses the reaction reduced [plastocyanin] + hnu + oxidized [2Fe-2S]-[ferredoxin] = oxidized [plastocyanin] + reduced [2Fe-2S]-[ferredoxin]. In terms of biological role, psaA and PsaB bind P700, the primary electron donor of photosystem I (PSI), as well as the electron acceptors A0, A1 and FX. PSI is a plastocyanin/cytochrome c6-ferredoxin oxidoreductase, converting photonic excitation into a charge separation, which transfers an electron from the donor P700 chlorophyll pair to the spectroscopically characterized acceptors A0, A1, FX, FA and FB in turn. Oxidized P700 is reduced on the lumenal side of the thylakoid membrane by plastocyanin or cytochrome c6. The chain is Photosystem I P700 chlorophyll a apoprotein A2 from Porphyra purpurea (Red seaweed).